The chain runs to 466 residues: MIQTKSETITREFTTSAKNRGSYWITTFGCQMNKADSERMAGILQAMGYQKAKTELCADLVLYNTCTIRDNAEQKVYSYLGRQAIRKKSSPHLKLVVAGCVAQQEGESLLRRVPELDLVMGPQHANRLEDLLNQVDNGQQVVATEEHLILEDLTAARRDSNICAWVNVIYGCNERCTYCVVPSVRGKEQSREPKAIKLEIEDLAKKGFKEVTLLGQNIDAYGRDLPGISSSGRRENTLTDLLYFIHDINGINRIRFATSHPRYFTTRLIEACAELPKLCEHFHIPFQSGDNEVLKRMGRGYTIEKYRRIIDKIRELMPNSSISSDVIVAFPGEDESQFQNTLKIIREIGFDQVNTAAYSQRPNTPAASWAEQLPESVKIDRLKELNLLVEQTAKDKNTRYHNQIVEVLAEGINPKNQEQLMGRTRTNRLTFFSKIGPKKYSYNPGDLVKVKISEIRAFSLTGSPIQ.

One can recognise an MTTase N-terminal domain in the interval 21–137 (GSYWITTFGC…LEDLLNQVDN (117 aa)). Residues Cys30, Cys66, Cys100, Cys172, Cys176, and Cys179 each contribute to the [4Fe-4S] cluster site. Residues 158–395 (RDSNICAWVN…NLLVEQTAKD (238 aa)) form the Radical SAM core domain. The 69-residue stretch at 398 to 466 (TRYHNQIVEV…AFSLTGSPIQ (69 aa)) folds into the TRAM domain.

It belongs to the methylthiotransferase family. MiaB subfamily. As to quaternary structure, monomer. [4Fe-4S] cluster serves as cofactor.

It is found in the cytoplasm. It carries out the reaction N(6)-dimethylallyladenosine(37) in tRNA + (sulfur carrier)-SH + AH2 + 2 S-adenosyl-L-methionine = 2-methylsulfanyl-N(6)-dimethylallyladenosine(37) in tRNA + (sulfur carrier)-H + 5'-deoxyadenosine + L-methionine + A + S-adenosyl-L-homocysteine + 2 H(+). Catalyzes the methylthiolation of N6-(dimethylallyl)adenosine (i(6)A), leading to the formation of 2-methylthio-N6-(dimethylallyl)adenosine (ms(2)i(6)A) at position 37 in tRNAs that read codons beginning with uridine. The chain is tRNA-2-methylthio-N(6)-dimethylallyladenosine synthase from Prochlorococcus marinus (strain SARG / CCMP1375 / SS120).